The following is a 332-amino-acid chain: Melanocortin receptor 4 (332 aa).

At 1–43 (MNSTLQHGMHTSLHFWNRSTYGQHSNATESLGKGYPDGGCYEQ) the chain is on the extracellular side. N-linked (GlcNAc...) asparagine glycans are attached at residues Asn2, Asn17, and Asn26. Disulfide bonds link Cys40–Cys279 and Cys271–Cys277. The helical transmembrane segment at 44–69 (LFVSPEVFVTLGVISLLENILVIVAI) threads the bilayer. Residues 70–81 (AKNKNLHSPMYF) are Cytoplasmic-facing. The chain crosses the membrane as a helical span at residues 82 to 106 (FICSLAVADMLVSVSNGSETIVITL). 3 residues coordinate Ca(2+): Glu100, Asp122, and Asp126. At 107 to 123 (LNSTDTDAQSFTVNIDN) the chain is on the extracellular side. A helical transmembrane segment spans residues 124–145 (VIDSVICSSLLASICSLLSIAV). Topologically, residues 146–165 (DRYFTIFYALQYHNIMTVRR) are cytoplasmic. Residues 166–186 (VGIIISCIWAACTVSGILFII) traverse the membrane as a helical segment. Over 187 to 191 (YSDST) the chain is Extracellular. The helical transmembrane segment at 192 to 215 (AVIICLITMFFTMLALMASLYVHM) threads the bilayer. At 216–248 (FLMARLHIKRIAVLPGTGTIRQGANMKGAITLT) the chain is on the cytoplasmic side. The chain crosses the membrane as a helical span at residues 249-271 (ILIGVFVVCWAPFFLHLIFYISC). Over 272–280 (PQNPYCVCF) the chain is Extracellular. A helical transmembrane segment spans residues 281-304 (MSHFNLYLILIMCNSIIDPLIYAL). Over 305 to 332 (RSQELRKTFKEIICCYPLGGLCDLSSRY) the chain is Cytoplasmic. The S-palmitoyl cysteine moiety is linked to residue Cys318.

Belongs to the G-protein coupled receptor 1 family. In terms of assembly, homodimer; disulfide-linked, also forms higher order oligomers. Interacts with GNAS. Interacts with ATRNL1. Interacts with MGRN1; this interaction competes with GNAS-binding and thus inhibits agonist-induced cAMP production. Interacts with MRAP and MRAP2; these associated factors increase ligand-sensitivity and generation of cAMP.

It is found in the cell membrane. In terms of biological role, hormone receptor that acts as a key component of the leptin-melanocortin pathway at the intersection of homeostatic maintenance of energetic state. Plays a role in regulating food intake: activation by a stimulating hormone such as anorexigenic alpha-melanocyte stimulating hormone (alpha-MSH) inhibits appetite, whereas binding to a natural antagonist like Agouti-related protein/AGRP promotes appetite. G-protein-coupled receptor that activates conventional Galphas signaling leading to induction of anorexogenic signaling in the hypothalamus to result in negative energy balance. Regulates the firing activity of neurons from the hypothalamus by alpha-MSH and AGRP independently of Galphas signaling by ligand-induced coupling of closure of inwardly rectifying potassium channel KCNJ13. In intestinal epithelial cells, plays a role in the inhibition of hepatic glucose production via nesfatin-1/NUCB2 leading to increased cyclic adenosine monophosphate (cAMP) levels and glucagon-like peptide 1 (GLP-1) secretion in the intestinal epithelium. The protein is Melanocortin receptor 4 (MC4R) of Vulpes vulpes (Red fox).